We begin with the raw amino-acid sequence, 466 residues long: Soluble pyridine nucleotide transhydrogenase (466 aa).

FAD is bound at residue 36 to 45; that stretch reads ERYQNVGGGC.

Belongs to the class-I pyridine nucleotide-disulfide oxidoreductase family. The cofactor is FAD.

The protein resides in the cytoplasm. It carries out the reaction NAD(+) + NADPH = NADH + NADP(+). Functionally, conversion of NADPH, generated by peripheral catabolic pathways, to NADH, which can enter the respiratory chain for energy generation. The sequence is that of Soluble pyridine nucleotide transhydrogenase from Escherichia coli O127:H6 (strain E2348/69 / EPEC).